An 85-amino-acid chain; its full sequence is Arminin 524 (85 aa).

The N-terminal stretch at 1–18 (MKAVFAILFLAFIALTYA) is a signal peptide. A propeptide spanning residues 19 to 57 (KSYDEVKEEIKNEVEREIFEDLEEESDELDNDVEEFNDA) is cleaved from the precursor. Residue A82 is modified to Alanine amide.

This sequence belongs to the arminin family. Expressed in entodermal epithelium along the body column.

The protein localises to the secreted. It localises to the target cell membrane. Its function is as follows. Antimicrobial peptide with a broad-spectrum antimicrobial activity. Keeps its antibacterial activity under a wide range of salt concentrations that mimic physiological conditions of human blood, which is surprising, since Hydra is an obligate freshwater animal with nearly no salt tolerance. Does not affect red blood cells. The polypeptide is Arminin 524 (Hydra oligactis (Brown hydra)).